The primary structure comprises 1207 residues: DNA-directed RNA polymerase subunit beta' (1207 aa).

Zn(2+) contacts are provided by Cys60, Cys62, Cys75, and Cys78. Residues Asp450, Asp452, and Asp454 each coordinate Mg(2+). Positions 818, 892, 899, and 902 each coordinate Zn(2+).

This sequence belongs to the RNA polymerase beta' chain family. The RNAP catalytic core consists of 2 alpha, 1 beta, 1 beta' and 1 omega subunit. When a sigma factor is associated with the core the holoenzyme is formed, which can initiate transcription. Mg(2+) serves as cofactor. It depends on Zn(2+) as a cofactor.

The catalysed reaction is RNA(n) + a ribonucleoside 5'-triphosphate = RNA(n+1) + diphosphate. DNA-dependent RNA polymerase catalyzes the transcription of DNA into RNA using the four ribonucleoside triphosphates as substrates. The chain is DNA-directed RNA polymerase subunit beta' from Lactococcus lactis subsp. cremoris (strain SK11).